Here is a 346-residue protein sequence, read N- to C-terminus: Phosphate acyltransferase (346 aa).

It belongs to the PlsX family. As to quaternary structure, homodimer. Probably interacts with PlsY.

The protein localises to the cytoplasm. It catalyses the reaction a fatty acyl-[ACP] + phosphate = an acyl phosphate + holo-[ACP]. The protein operates within lipid metabolism; phospholipid metabolism. Its function is as follows. Catalyzes the reversible formation of acyl-phosphate (acyl-PO(4)) from acyl-[acyl-carrier-protein] (acyl-ACP). This enzyme utilizes acyl-ACP as fatty acyl donor, but not acyl-CoA. The protein is Phosphate acyltransferase of Psychromonas ingrahamii (strain DSM 17664 / CCUG 51855 / 37).